We begin with the raw amino-acid sequence, 331 residues long: Holliday junction branch migration complex subunit RuvB (331 aa).

A large ATPase domain (RuvB-L) region spans residues 1–182 (MSNDTLHKYE…FGIPLHLEFY (182 aa)). ATP is bound by residues Leu-21, Arg-22, Gly-63, Lys-66, Thr-67, Thr-68, 129 to 131 (EDY), Arg-172, Tyr-182, and Arg-219. Thr-67 contacts Mg(2+). Residues 183–254 (SVDELVLVIK…FANSALFRLG (72 aa)) form a small ATPAse domain (RuvB-S) region. The head domain (RuvB-H) stretch occupies residues 257 to 331 (GAGFDKMDLK…FEYLLSSKYI (75 aa)). Arg-310 and Arg-315 together coordinate DNA.

It belongs to the RuvB family. Homohexamer. Forms an RuvA(8)-RuvB(12)-Holliday junction (HJ) complex. HJ DNA is sandwiched between 2 RuvA tetramers; dsDNA enters through RuvA and exits via RuvB. An RuvB hexamer assembles on each DNA strand where it exits the tetramer. Each RuvB hexamer is contacted by two RuvA subunits (via domain III) on 2 adjacent RuvB subunits; this complex drives branch migration. In the full resolvosome a probable DNA-RuvA(4)-RuvB(12)-RuvC(2) complex forms which resolves the HJ.

It is found in the cytoplasm. The catalysed reaction is ATP + H2O = ADP + phosphate + H(+). Functionally, the RuvA-RuvB-RuvC complex processes Holliday junction (HJ) DNA during genetic recombination and DNA repair, while the RuvA-RuvB complex plays an important role in the rescue of blocked DNA replication forks via replication fork reversal (RFR). RuvA specifically binds to HJ cruciform DNA, conferring on it an open structure. The RuvB hexamer acts as an ATP-dependent pump, pulling dsDNA into and through the RuvAB complex. RuvB forms 2 homohexamers on either side of HJ DNA bound by 1 or 2 RuvA tetramers; 4 subunits per hexamer contact DNA at a time. Coordinated motions by a converter formed by DNA-disengaged RuvB subunits stimulates ATP hydrolysis and nucleotide exchange. Immobilization of the converter enables RuvB to convert the ATP-contained energy into a lever motion, pulling 2 nucleotides of DNA out of the RuvA tetramer per ATP hydrolyzed, thus driving DNA branch migration. The RuvB motors rotate together with the DNA substrate, which together with the progressing nucleotide cycle form the mechanistic basis for DNA recombination by continuous HJ branch migration. Branch migration allows RuvC to scan DNA until it finds its consensus sequence, where it cleaves and resolves cruciform DNA. This Anaplasma marginale (strain Florida) protein is Holliday junction branch migration complex subunit RuvB.